The following is a 333-amino-acid chain: MANVMKAPKRQLTYVTDLNKCIGCQTCTVACKKLWTTGPGQDFMYWRNVETTPGLGYPRNWQTKGGGYKNGELQKGKIPPMIDYGIPFEFDYAGRLFEGKKERVRPSPTPRSAPNWDEDQGAGEYPNNSFFYLPRMCNHCTKPACLEACPNEAIYKREQDGIVVIHQDKCKGAQACVQSCPYAKPYFNPVANKANKCIGCFPRIEQGVAPGCVAQCVGRAMHVGFIDDTNSSVHKLIRLYKVALPLHPEFGTEPNVFYVPPVLGPRMELPNGELSTDPKIPLAQLEGLFGKQVRDVLAILQTEREKKMKGLASDLMDVLIGRRSADMMISPLT.

Positions 12 to 40 constitute a 4Fe-4S ferredoxin-type 1 domain; the sequence is LTYVTDLNKCIGCQTCTVACKKLWTTGPG. Residues cysteine 21, cysteine 24, cysteine 27, and cysteine 31 each contribute to the [4Fe-4S] cluster site. Residues 101-121 are disordered; sequence KERVRPSPTPRSAPNWDEDQG. 4Fe-4S ferredoxin-type domains are found at residues 128–159 and 161–190; these read NSFF…KREQ and GIVV…FNPV. Cysteine 137, cysteine 140, and cysteine 145 together coordinate [4Fe-4S] cluster. Cysteine 149, cysteine 170, and cysteine 176 together coordinate [3Fe-4S] cluster. Residues cysteine 180, cysteine 197, cysteine 200, cysteine 212, and cysteine 216 each coordinate [4Fe-4S] cluster.

Heterotrimer of alpha, beta and gamma subunits. The cofactor is [3Fe-4S] cluster. It depends on [4Fe-4S] cluster as a cofactor.

The protein localises to the periplasm. Functionally, component of the perchlorate reductase that catalyzes the reduction of perchlorate to chlorite and allows anaerobic growth on perchlorate as the sole electron acceptor. The beta subunit may be responsible for electron transfer to the catalytic alpha subunit PcrA. In Dechloromonas aromatica (strain RCB), this protein is Perchlorate reductase subunit beta (pcrB).